We begin with the raw amino-acid sequence, 141 residues long: Nucleoside diphosphate kinase (141 aa).

The ATP site is built by lysine 11, phenylalanine 59, arginine 87, threonine 93, arginine 104, and asparagine 114. Histidine 117 acts as the Pros-phosphohistidine intermediate in catalysis.

It belongs to the NDK family. Homotetramer. Requires Mg(2+) as cofactor.

The protein localises to the cytoplasm. The enzyme catalyses a 2'-deoxyribonucleoside 5'-diphosphate + ATP = a 2'-deoxyribonucleoside 5'-triphosphate + ADP. The catalysed reaction is a ribonucleoside 5'-diphosphate + ATP = a ribonucleoside 5'-triphosphate + ADP. Its function is as follows. Major role in the synthesis of nucleoside triphosphates other than ATP. The ATP gamma phosphate is transferred to the NDP beta phosphate via a ping-pong mechanism, using a phosphorylated active-site intermediate. The polypeptide is Nucleoside diphosphate kinase (Paracidovorax citrulli (strain AAC00-1) (Acidovorax citrulli)).